The sequence spans 101 residues: Putative septation protein SpoVG (101 aa).

It belongs to the SpoVG family.

In terms of biological role, could be involved in septation. This is Putative septation protein SpoVG from Anaeromyxobacter dehalogenans (strain 2CP-C).